The chain runs to 218 residues: Monomethylamine corrinoid protein 1 (218 aa).

The region spanning 1–91 is the B12-binding N-terminal domain; the sequence is MANQEIFDKL…ELEKTKVEGE (91 aa). Residues 94-218 enclose the B12-binding domain; sequence TGLAITFVAE…AAKVALNIMK (125 aa). H107 provides a ligand contact to methylcob(III)alamin.

It belongs to the methylamine corrinoid protein family. Can form a complex with MtmB.

Its pathway is one-carbon metabolism; methanogenesis from methylamine. Its function is as follows. Acts as a methyl group carrier between MtmB and MtbA. This chain is Monomethylamine corrinoid protein 1 (mtmC1), found in Methanosarcina mazei (strain ATCC BAA-159 / DSM 3647 / Goe1 / Go1 / JCM 11833 / OCM 88) (Methanosarcina frisia).